A 315-amino-acid chain; its full sequence is Probable mannose-6-phosphate isomerase GmuF (315 aa).

4 residues coordinate Zn(2+): Gln95, His97, Glu115, and His172. Arg192 is a catalytic residue.

Belongs to the mannose-6-phosphate isomerase type 1 family. Zn(2+) is required as a cofactor.

It catalyses the reaction D-mannose 6-phosphate = D-fructose 6-phosphate. Functionally, seems to be involved in the degradation of glucomannan. The chain is Probable mannose-6-phosphate isomerase GmuF (gmuF) from Bacillus subtilis (strain 168).